A 158-amino-acid chain; its full sequence is NAD(P)H-quinone oxidoreductase subunit J, chloroplastic (158 aa).

This sequence belongs to the complex I 30 kDa subunit family. In terms of assembly, NDH is composed of at least 16 different subunits, 5 of which are encoded in the nucleus.

The protein localises to the plastid. It localises to the chloroplast thylakoid membrane. It carries out the reaction a plastoquinone + NADH + (n+1) H(+)(in) = a plastoquinol + NAD(+) + n H(+)(out). The enzyme catalyses a plastoquinone + NADPH + (n+1) H(+)(in) = a plastoquinol + NADP(+) + n H(+)(out). In terms of biological role, NDH shuttles electrons from NAD(P)H:plastoquinone, via FMN and iron-sulfur (Fe-S) centers, to quinones in the photosynthetic chain and possibly in a chloroplast respiratory chain. The immediate electron acceptor for the enzyme in this species is believed to be plastoquinone. Couples the redox reaction to proton translocation, and thus conserves the redox energy in a proton gradient. In Solanum bulbocastanum (Wild potato), this protein is NAD(P)H-quinone oxidoreductase subunit J, chloroplastic.